The sequence spans 109 residues: Archaeosine synthase (109 aa).

Catalysis depends on cysteine 21, which acts as the Thioimide intermediate. Aspartate 28 acts as the Proton donor/acceptor in catalysis. Substrate-binding positions include aspartate 28, 43 to 46 (LAIE), and 62 to 63 (HE).

Belongs to the archaeosine synthase type 2 family. Forms a symmetric tunnel-fold (T-fold) homodecamer of two head-to-head facing pentameric subunits, with 10 active sites at the intermonomer interfaces.

The catalysed reaction is 7-cyano-7-carbaguanosine(15) in tRNA + NH4(+) = archaeosine(15) in tRNA. Its pathway is tRNA modification; archaeosine-tRNA biosynthesis. Functionally, is responsible for the final step in the biosynthesis of archaeosine, a modified nucleoside present in the dihydrouridine loop (D-loop) of archaeal tRNA. Catalyzes the conversion of 7-cyano-7-deazaguanine (preQ0)-modified tRNA to archaeosine-tRNA, transforming a nitrile group to a formamidine group. Can use neither glutamine nor asparagine as amino donor in vitro, is only able to utilize free ammonium. However, the enzyme might function in vivo with a partner that serves to generate ammonium. The protein is Archaeosine synthase of Pyrobaculum calidifontis (strain DSM 21063 / JCM 11548 / VA1).